The following is a 174-amino-acid chain: Co-chaperone protein HscB homolog (174 aa).

A J domain is found at 2 to 74 (NYFELFSLLP…IQRAEHLLTL (73 aa)).

Belongs to the HscB family. In terms of assembly, interacts with HscA and stimulates its ATPase activity.

In terms of biological role, co-chaperone involved in the maturation of iron-sulfur cluster-containing proteins. Seems to help targeting proteins to be folded toward HscA. The protein is Co-chaperone protein HscB homolog of Shewanella halifaxensis (strain HAW-EB4).